A 216-amino-acid chain; its full sequence is Probable nicotinate-nucleotide adenylyltransferase (216 aa).

This sequence belongs to the NadD family.

It carries out the reaction nicotinate beta-D-ribonucleotide + ATP + H(+) = deamido-NAD(+) + diphosphate. It functions in the pathway cofactor biosynthesis; NAD(+) biosynthesis; deamido-NAD(+) from nicotinate D-ribonucleotide: step 1/1. In terms of biological role, catalyzes the reversible adenylation of nicotinate mononucleotide (NaMN) to nicotinic acid adenine dinucleotide (NaAD). The polypeptide is Probable nicotinate-nucleotide adenylyltransferase (Geobacillus kaustophilus (strain HTA426)).